A 797-amino-acid polypeptide reads, in one-letter code: Kinesin-like protein KIF18B (797 aa).

A Kinesin motor domain is found at 11-352 (TVAVVVRVRP…LKYANRAKEI (342 aa)). Residue 110–117 (GATGAGKT) coordinates ATP. Residues 367-402 (ISKYATICEQLKTEVADLQAKLRAYEDAARDAGKQI) adopt a coiled-coil conformation. 4 disordered regions span residues 412 to 476 (EEAV…PNRL), 528 to 564 (AAVS…PSVP), 579 to 640 (LSSP…KEPQ), and 730 to 797 (KGSS…SGPR). Residues 594–608 (MSNTSRLETPHSLNT) show a composition bias toward polar residues. The span at 731–744 (GSSIPKPSSISKGS) shows a compositional bias: low complexity.

Belongs to the TRAFAC class myosin-kinesin ATPase superfamily. Kinesin family.

The protein resides in the nucleus. It is found in the cytoplasm. It localises to the cytoskeleton. May play an important role in microtubule plus-end depolymerizing activity in mitotic cells. The protein is Kinesin-like protein KIF18B (KIF18B) of Gallus gallus (Chicken).